Here is a 418-residue protein sequence, read N- to C-terminus: Light-independent protochlorophyllide reductase subunit N (418 aa).

[4Fe-4S] cluster is bound by residues Cys-17, Cys-42, and Cys-103.

This sequence belongs to the BchN/ChlN family. In terms of assembly, protochlorophyllide reductase is composed of three subunits; ChlL, ChlN and ChlB. Forms a heterotetramer of two ChlB and two ChlN subunits. [4Fe-4S] cluster serves as cofactor.

The enzyme catalyses chlorophyllide a + oxidized 2[4Fe-4S]-[ferredoxin] + 2 ADP + 2 phosphate = protochlorophyllide a + reduced 2[4Fe-4S]-[ferredoxin] + 2 ATP + 2 H2O. Its pathway is porphyrin-containing compound metabolism; chlorophyll biosynthesis (light-independent). Functionally, component of the dark-operative protochlorophyllide reductase (DPOR) that uses Mg-ATP and reduced ferredoxin to reduce ring D of protochlorophyllide (Pchlide) to form chlorophyllide a (Chlide). This reaction is light-independent. The NB-protein (ChlN-ChlB) is the catalytic component of the complex. The protein is Light-independent protochlorophyllide reductase subunit N of Prochlorococcus marinus (strain MIT 9515).